The sequence spans 184 residues: GMP synthase [glutamine-hydrolyzing] subunit A (184 aa).

Residues 3-184 form the Glutamine amidotransferase type-1 domain; sequence PLYVVNNHGQ…FENFDGICSE (182 aa). Cysteine 75 serves as the catalytic Nucleophile. Residues histidine 162 and glutamate 164 contribute to the active site.

Heterodimer composed of a glutamine amidotransferase subunit (A) and a GMP-binding subunit (B).

It carries out the reaction XMP + L-glutamine + ATP + H2O = GMP + L-glutamate + AMP + diphosphate + 2 H(+). It participates in purine metabolism; GMP biosynthesis; GMP from XMP (L-Gln route): step 1/1. In terms of biological role, catalyzes the synthesis of GMP from XMP. In Methanoculleus marisnigri (strain ATCC 35101 / DSM 1498 / JR1), this protein is GMP synthase [glutamine-hydrolyzing] subunit A.